A 90-amino-acid chain; its full sequence is Serine-rich and transmembrane domain-containing 2 (90 aa).

The N-linked (GlcNAc...) asparagine glycan is linked to N11. The helical transmembrane segment at Y38 to L58 threads the bilayer. A disordered region spans residues S69–P90.

The protein localises to the membrane. The chain is Serine-rich and transmembrane domain-containing 2 from Homo sapiens (Human).